A 602-amino-acid polypeptide reads, in one-letter code: Type II restriction enzyme StsI (602 aa).

The enzyme catalyses Endonucleolytic cleavage of DNA to give specific double-stranded fragments with terminal 5'-phosphates.. In terms of biological role, an S subtype restriction enzyme that recognizes the double-stranded sequences 5'-GGATG-3' and 3'-CATCC-5' and cleaves respectively 15 bases after G-1 and 14 bases before C-1. This is Type II restriction enzyme StsI (stsIR) from Streptococcus sanguinis.